A 502-amino-acid polypeptide reads, in one-letter code: Regulatory protein E2 (502 aa).

Positions 1 to 201 (MENLSERFNV…DTVFTPVTSS (201 aa)) are transactivation domain. The segment at 195–388 (FTPVTSSTPP…RESGSVRLHG (194 aa)) is disordered. Over residues 211–242 (ADSNTSSKTPTTDTASRLSPTGSGERSQQTST) the composition is skewed to polar residues. Composition is skewed to basic residues over residues 243–290 (KGRR…SRSR) and 298–311 (SKRR…RKTS). Residues 312-344 (ATRGRGPGSPTTTTSDRAARSPSTTSSATSQRS) are compositionally biased toward low complexity. Residues 357-367 (GRGRGGRRRHR) are compositionally biased toward basic residues. Positions 418-502 (DPPVILVRGD…DRSFGSFDSL (85 aa)) are DNA-binding domain.

It belongs to the papillomaviridae E2 protein family. In terms of assembly, binds DNA as homodimer. Interacts with protein E1; this interaction greatly increases E1 DNA-binding activity. Interacts with protein L1; this interaction enhances E2-dependent replication and transcription activation. Interacts with protein L2; this interaction inhibits E2 transcriptional activity but not DNA replication function E2. Interacts with protein E7; this interaction inhibits E7 oncogenic activity. Interacts with host TAF1; this interaction modulates E2-dependent transcriptional regulation. Interacts with host BRD4; this interaction mediates E2 transcriptional activation function. Additionally, the interaction with host BRD4 on mitotic chromosomes mediates tethering of the viral genome. Interacts with host TOPBP1; this interaction is required for optimal viral DNA replication. Phosphorylated.

It localises to the host nucleus. In terms of biological role, plays a role in the initiation of viral DNA replication. A dimer of E2 interacts with a dimer of E1 in order to improve specificity of E1 DNA binding activity. Once the complex recognizes and binds DNA at specific sites, the E2 dimer is removed from DNA. E2 also regulates viral transcription through binding to the E2RE response element (5'-ACCNNNNNNGGT-3') present in multiple copies in the regulatory regions of the viral genome. Activates or represses transcription depending on E2RE's position with regards to proximal promoter elements including the TATA-box. Repression occurs by sterically hindering the assembly of the transcription initiation complex. The sequence is that of Regulatory protein E2 from Human papillomavirus 25.